Consider the following 240-residue polypeptide: NAD(P)H-hydrate epimerase (240 aa).

The YjeF N-terminal domain occupies 15–224 (AQEIDAELMG…SYNLKLPCYP (210 aa)). 66-70 (NQGGD) is a (6S)-NADPHX binding site. 2 residues coordinate K(+): glutamine 67 and aspartate 129. (6S)-NADPHX contacts are provided by residues 133 to 139 (GFSFHSE) and aspartate 162. Position 165 (serine 165) interacts with K(+).

It belongs to the NnrE/AIBP family. It depends on K(+) as a cofactor.

It is found in the cytoplasm. Its subcellular location is the mitochondrion. The catalysed reaction is (6R)-NADHX = (6S)-NADHX. It catalyses the reaction (6R)-NADPHX = (6S)-NADPHX. Its function is as follows. Catalyzes the epimerization of the S- and R-forms of NAD(P)HX, a damaged form of NAD(P)H that is a result of enzymatic or heat-dependent hydration. This is a prerequisite for the S-specific NAD(P)H-hydrate dehydratase to allow the repair of both epimers of NAD(P)HX. The polypeptide is NAD(P)H-hydrate epimerase (Puccinia graminis f. sp. tritici (strain CRL 75-36-700-3 / race SCCL) (Black stem rust fungus)).